Consider the following 152-residue polypeptide: Protein-export protein SecB (152 aa).

It belongs to the SecB family. In terms of assembly, homotetramer, a dimer of dimers. One homotetramer interacts with 1 SecA dimer.

It is found in the cytoplasm. Its function is as follows. One of the proteins required for the normal export of preproteins out of the cell cytoplasm. It is a molecular chaperone that binds to a subset of precursor proteins, maintaining them in a translocation-competent state. It also specifically binds to its receptor SecA. This Rickettsia bellii (strain RML369-C) protein is Protein-export protein SecB.